The sequence spans 184 residues: CKLF-like MARVEL transmembrane domain-containing protein 3 (184 aa).

A compositionally biased stretch (acidic residues) spans 1–12; the sequence is MWPPDAEPEPDP. Residues 1–22 form a disordered region; the sequence is MWPPDAEPEPDPESAHGPRSGR. Residues 36–155 enclose the MARVEL domain; that stretch reads FLCSLKGRLL…DFYLIFNEVA (120 aa). Transmembrane regions (helical) follow at residues 64–84, 96–116, and 131–151; these read ASAFLTVPLLEFLLAVYFLFA, LCWPMMDFLRCVTAALIYFVI, and AAGVFGFFATIVFAIDFYLIF. Residues 163–184 are disordered; that stretch reads SGNETTAHRTEEENSNSDSDSD. Residues 175–184 are compositionally biased toward acidic residues; sequence ENSNSDSDSD.

This sequence belongs to the chemokine-like factor family.

It is found in the membrane. The chain is CKLF-like MARVEL transmembrane domain-containing protein 3 (Cmtm3) from Mus musculus (Mouse).